A 221-amino-acid chain; its full sequence is Ras-related protein Rab-27A (221 aa).

Ser2 is subject to N-acetylserine. The residue at position 2 (Ser2) is a Phosphoserine. Residue 16–24 coordinates GTP; it reads GDSGVGKTS. An Effector region motif is present at residues 38-46; it reads FITTVGIDF. Residues 74–78, 133–136, and 163–165 contribute to the GTP site; these read DTAGQ, NKSD, and SAA. An intrachain disulfide couples Cys123 to Cys188. S-geranylgeranyl cysteine attachment occurs at residues Cys219 and Cys221. Cys221 bears the Cysteine methyl ester mark.

The protein belongs to the small GTPase superfamily. Rab family. As to quaternary structure, binds SYTL1, SLAC2B, MYRIP, SYTL3, SYTL4 and SYTL5. Interacts with RPH3A and RPH3A. Binds MLPH and SYTL2. Interacts with UNC13D. Does not interact with the BLOC-3 complex (heterodimer of HPS1 and HPS4). Interacts (GDP-bound form preferentially) with DENND10. High levels in eye, intestine, lung, pancreas and spleen, and low or absent in brain, liver, heart, kidney, and skeletal muscle.

The protein resides in the membrane. It is found in the melanosome. Its subcellular location is the late endosome. The protein localises to the lysosome. The catalysed reaction is GTP + H2O = GDP + phosphate + H(+). With respect to regulation, regulated by guanine nucleotide exchange factors (GEFs) which promote the exchange of bound GDP for free GTP, GTPase activating proteins (GAPs) which increase the GTP hydrolysis activity, and GDP dissociation inhibitors which inhibit the dissociation of the nucleotide from the GTPase. Activated by GEFs such as DENND10. In terms of biological role, small GTPase which cycles between active GTP-bound and inactive GDP-bound states. In its active state, binds to a variety of effector proteins to regulate homeostasis of late endocytic pathway, including endosomal positioning, maturation and secretion. Plays a role in cytotoxic granule exocytosis in lymphocytes. Required for both granule maturation and granule docking and priming at the immunologic synapse. The protein is Ras-related protein Rab-27A (Rab27a) of Rattus norvegicus (Rat).